We begin with the raw amino-acid sequence, 255 residues long: Proteasome subunit alpha (255 aa).

The segment covering 190 to 201 (PSTSGASGNGET) has biased composition (polar residues). A disordered region spans residues 190–255 (PSTSGASGNG…DKSSGDGEQN (66 aa)). A compositionally biased stretch (basic and acidic residues) spans 202–217 (EPSKLEVAILDRERPG).

Belongs to the peptidase T1A family. In terms of assembly, the 20S proteasome core is composed of 14 alpha and 14 beta subunits that assemble into four stacked heptameric rings, resulting in a barrel-shaped structure. The two inner rings, each composed of seven catalytic beta subunits, are sandwiched by two outer rings, each composed of seven alpha subunits. The catalytic chamber with the active sites is on the inside of the barrel. Has a gated structure, the ends of the cylinder being occluded by the N-termini of the alpha-subunits. Is capped by the proteasome-associated ATPase, ARC.

Its subcellular location is the cytoplasm. It participates in protein degradation; proteasomal Pup-dependent pathway. The formation of the proteasomal ATPase ARC-20S proteasome complex, likely via the docking of the C-termini of ARC into the intersubunit pockets in the alpha-rings, may trigger opening of the gate for substrate entry. Interconversion between the open-gate and close-gate conformations leads to a dynamic regulation of the 20S proteasome proteolysis activity. Its function is as follows. Component of the proteasome core, a large protease complex with broad specificity involved in protein degradation. The sequence is that of Proteasome subunit alpha from Saccharomonospora viridis (strain ATCC 15386 / DSM 43017 / JCM 3036 / CCUG 5913 / NBRC 12207 / NCIMB 9602 / P101) (Thermoactinomyces viridis).